A 297-amino-acid chain; its full sequence is HTH-type transcriptional regulator ArgP (297 aa).

The 57-residue stretch at 4–60 folds into the HTH lysR-type domain; that stretch reads PDYRTLQALDAVIRERGFERAAQKLCITQSAVSQRIKQLENMFGQPLLVRTVPPRPT. Positions 21–40 form a DNA-binding region, H-T-H motif; sequence FERAAQKLCITQSAVSQRIK.

It belongs to the LysR transcriptional regulatory family. As to quaternary structure, homodimer.

Functionally, controls the transcription of genes involved in arginine and lysine metabolism. This chain is HTH-type transcriptional regulator ArgP, found in Salmonella choleraesuis (strain SC-B67).